A 671-amino-acid polypeptide reads, in one-letter code: Acetyl-coenzyme A synthetase 1 (671 aa).

Residues 210 to 213 (RGGK) and T329 contribute to the CoA site. ATP is bound by residues 405–407 (GEP), 429–434 (DTYWQT), D520, and R535. CoA is bound at residue S543. ATP is bound at residue R546. R605 contributes to the CoA binding site.

This sequence belongs to the ATP-dependent AMP-binding enzyme family.

The enzyme catalyses acetate + ATP + CoA = acetyl-CoA + AMP + diphosphate. The chain is Acetyl-coenzyme A synthetase 1 (ACS1) from Debaryomyces hansenii (strain ATCC 36239 / CBS 767 / BCRC 21394 / JCM 1990 / NBRC 0083 / IGC 2968) (Yeast).